We begin with the raw amino-acid sequence, 254 residues long: Polysaccharide deacetylase domain-containing protein ECU11_0510 (254 aa).

A NodB homology domain is found at 26 to 210 (GMIAINFVDG…IGKDKGYRFV (185 aa)).

This chain is Polysaccharide deacetylase domain-containing protein ECU11_0510, found in Encephalitozoon cuniculi (strain GB-M1) (Microsporidian parasite).